A 417-amino-acid chain; its full sequence is NADH-quinone oxidoreductase subunit D (417 aa).

It belongs to the complex I 49 kDa subunit family. As to quaternary structure, NDH-1 is composed of 14 different subunits. Subunits NuoB, C, D, E, F, and G constitute the peripheral sector of the complex.

It localises to the cell inner membrane. It carries out the reaction a quinone + NADH + 5 H(+)(in) = a quinol + NAD(+) + 4 H(+)(out). In terms of biological role, NDH-1 shuttles electrons from NADH, via FMN and iron-sulfur (Fe-S) centers, to quinones in the respiratory chain. The immediate electron acceptor for the enzyme in this species is believed to be ubiquinone. Couples the redox reaction to proton translocation (for every two electrons transferred, four hydrogen ions are translocated across the cytoplasmic membrane), and thus conserves the redox energy in a proton gradient. The protein is NADH-quinone oxidoreductase subunit D of Coxiella burnetii (strain Dugway 5J108-111).